A 522-amino-acid polypeptide reads, in one-letter code: Semenogelin-2 (522 aa).

Positions 1 to 23 (MKSIILFVLSLLLILEKQAAVMG) are cleaved as a signal peptide. Disordered regions lie at residues 26–62 (CGSK…SKGS), 132–158 (GGQA…ISSQ), 272–358 (NLNQ…ERHL), and 379–522 (EEQI…PVST). Polar residues-rich tracts occupy residues 31-40 (QLPSGSSQFP) and 137-158 (RGTQ…ISSQ). The span at 292–310 (RTEERQLNRGEKSVQKDVS) shows a compositional bias: basic and acidic residues. Residues 325–335 (KSQNQVTIHSQ) show a composition bias toward polar residues. Positions 336–345 (GQEHGHKENK) are enriched in basic and acidic residues. 3 stretches are compositionally biased toward polar residues: residues 379–397 (EEQI…SQAQ), 427–436 (KDVSQSSTSF), and 446–464 (SQIQ…QNAK). Composition is skewed to basic and acidic residues over residues 465-492 (GKSD…ESSE) and 499-522 (TEHE…PVST).

This sequence belongs to the semenogelin family. In terms of assembly, interacts with SERPINA5.

It localises to the secreted. Its function is as follows. Participates in the formation of a gel matrix (sperm coagulum) entrapping the accessory gland secretions and ejaculated spermatozoa. This chain is Semenogelin-2 (SEMG2), found in Hylobates klossii (Kloss's gibbon).